Here is a 390-residue protein sequence, read N- to C-terminus: tRNA (guanine(26)-N(2))-dimethyltransferase (390 aa).

The 375-residue stretch at 4–378 folds into the Trm1 methyltransferase domain; it reads HIIEEGLVKI…MPLDELKQLI (375 aa). Residues R37, R67, D85, D112, and A113 each coordinate S-adenosyl-L-methionine. Zn(2+)-binding residues include C245, C248, C265, and C268.

It belongs to the class I-like SAM-binding methyltransferase superfamily. Trm1 family.

The enzyme catalyses guanosine(26) in tRNA + 2 S-adenosyl-L-methionine = N(2)-dimethylguanosine(26) in tRNA + 2 S-adenosyl-L-homocysteine + 2 H(+). Its function is as follows. Dimethylates a single guanine residue at position 26 of a number of tRNAs using S-adenosyl-L-methionine as donor of the methyl groups. This chain is tRNA (guanine(26)-N(2))-dimethyltransferase, found in Methanosphaera stadtmanae (strain ATCC 43021 / DSM 3091 / JCM 11832 / MCB-3).